A 458-amino-acid polypeptide reads, in one-letter code: Retinoic acid receptor alpha (458 aa).

The tract at residues 1–86 (MASNGGSCPS…PPPLPRIYKP (86 aa)) is modulating. The span at 54 to 68 (TPSPATIETQSTSSE) shows a compositional bias: polar residues. Residues 54-76 (TPSPATIETQSTSSEEIVPSPPS) are disordered. 2 consecutive NR C4-type zinc fingers follow at residues 87–107 (CFVCQDKSSGYHYGVSACEGC) and 123–147 (CHRDKTCIINKVTRNRCQYCRLQKC). A DNA-binding region (nuclear receptor) is located at residues 87–152 (CFVCQDKSSG…RLQKCFEVGM (66 aa)). Residues 153–182 (SKESVRNDRNKKKKQEAPKQECTESYIITP) form a hinge region. The region spanning 183-417 (EVEDLVEKVR…PLIQEMLENS (235 aa)) is the NR LBD domain. The 9aaTAD signature appears at 408–416 (PLIQEMLEN). The disordered stretch occupies residues 417–458 (SEGLDSLTGQPPRASSLAPPPGSCSPSLSPSSNRSSPTSHSP). A compositionally biased stretch (low complexity) spans 440–458 (CSPSLSPSSNRSSPTSHSP).

Belongs to the nuclear hormone receptor family. NR1 subfamily. In terms of assembly, heterodimer; with an rxr molecule. Binds DNA preferentially as a rar/rxr heterodimer. Expressed in forelimb, in the distal forelimb blastema, kidney, liver and hindlimb blastemal mesenchymal cells.

It is found in the nucleus. Its function is as follows. Receptor for retinoic acid. Retinoic acid receptors bind as heterodimers to their target response elements in response to their ligands, all-trans or 9-cis retinoic acid, and regulate gene expression in various biological processes. The rar/rxr heterodimers bind to the retinoic acid response elements (RARE) composed of tandem 5'-AGGTCA-3' sites known as DR1-DR5. Retinoic acid signaling appears to be involved in specifying proximal-distal axis in limb regeneration. In Notophthalmus viridescens (Eastern newt), this protein is Retinoic acid receptor alpha (RARA).